We begin with the raw amino-acid sequence, 186 residues long: Der GTPase-activating protein YihI (186 aa).

Residues 1 to 65 form a disordered region; that stretch reads MARTKKTRRI…AGSRHSAVDT (65 aa). Composition is skewed to basic and acidic residues over residues 9–25 and 34–45; these read RITD…RPEN and TRYELDAKSREE.

It belongs to the YihI family. In terms of assembly, interacts with Der.

Its function is as follows. A GTPase-activating protein (GAP) that modifies Der/EngA GTPase function. May play a role in ribosome biogenesis. The protein is Der GTPase-activating protein YihI of Histophilus somni (strain 129Pt) (Haemophilus somnus).